A 306-amino-acid polypeptide reads, in one-letter code: N-acetylmuramic acid 6-phosphate etherase (306 aa).

The SIS domain maps to 55–218; that stretch reads AAATLLAGGR…STGAMIKIGK (164 aa). E83 functions as the Proton donor in the catalytic mechanism. The active site involves E114.

The protein belongs to the GCKR-like family. MurNAc-6-P etherase subfamily. As to quaternary structure, homodimer.

It catalyses the reaction N-acetyl-D-muramate 6-phosphate + H2O = N-acetyl-D-glucosamine 6-phosphate + (R)-lactate. Its pathway is amino-sugar metabolism; 1,6-anhydro-N-acetylmuramate degradation. The protein operates within amino-sugar metabolism; N-acetylmuramate degradation. It functions in the pathway cell wall biogenesis; peptidoglycan recycling. Specifically catalyzes the cleavage of the D-lactyl ether substituent of MurNAc 6-phosphate, producing GlcNAc 6-phosphate and D-lactate. Together with AnmK, is also required for the utilization of anhydro-N-acetylmuramic acid (anhMurNAc) either imported from the medium or derived from its own cell wall murein, and thus plays a role in cell wall recycling. The polypeptide is N-acetylmuramic acid 6-phosphate etherase (Erwinia tasmaniensis (strain DSM 17950 / CFBP 7177 / CIP 109463 / NCPPB 4357 / Et1/99)).